The chain runs to 296 residues: Adrenocorticotropic hormone receptor (296 aa).

The Extracellular portion of the chain corresponds to 1 to 23 (MKHIINSYEHTNDTARNNSDCPD). Residues asparagine 12 and asparagine 17 are each glycosylated (N-linked (GlcNAc...) asparagine). 2 disulfides stabilise this stretch: cysteine 21/cysteine 253 and cysteine 245/cysteine 251. Residues 24–49 (VVLPEEIFFTISVIGILENLIVLLAV) traverse the membrane as a helical segment. Over 50–58 (IKNKNLQSP) the chain is Cytoplasmic. Residues 59–79 (MYFFICSLAISDMLGSLYKIL) traverse the membrane as a helical segment. Residues 80–104 (ENILIMFRNMGYLKPRGSFESTADD) lie on the Extracellular side of the membrane. A helical membrane pass occupies residues 105 to 126 (IIDCMFILSLLGSIFSLSVIAA). Residues 127 to 147 (DRYITIFHALQYHSIVTMRRT) are Cytoplasmic-facing. A helical membrane pass occupies residues 148–168 (IITLTIIWMFCTGSGITMVIF). Residues 169 to 180 (SHHIPTVLTFTS) lie on the Extracellular side of the membrane. The helical transmembrane segment at 181–199 (LFPLMLVFILCLYIHMFLL) threads the bilayer. Topologically, residues 200 to 217 (ARSHARKISTLPRTNMKG) are cytoplasmic. A helical membrane pass occupies residues 218 to 244 (AMTLTILLGVFIFCWAPFVLHVLLMTF). The Extracellular portion of the chain corresponds to 245-256 (CPNNPYCVCYMS). The helical transmembrane segment at 257-278 (LFQVNGMLIMCNAVIDPFIYAF) threads the bilayer. Over 279 to 296 (RSPELRDAFKRMLFCNRY) the chain is Cytoplasmic. Cysteine 293 is lipidated: S-palmitoyl cysteine.

Belongs to the G-protein coupled receptor 1 family. In terms of assembly, homodimer. Interacts with corticotropin (ACTH). Interacts with MRAP; this interaction targets MC2R to the plasma membrane. Interacts with MRAP2; competing with MRAP for binding to MC2R and impairing the binding of corticotropin (ACTH). In terms of processing, ubiquitinated by MGRN1 that may be involved in post-endocytic trafficking and/or degradation of internalized receptor.

Its subcellular location is the cell membrane. Its function is as follows. Hormone receptor primarily expressed in adrenal cortex that plays a key role in regulating adrenocortical function. Upon corticotropin (ACTH) binding, facilitates the release of adrenal glucocorticoids, including cortisol and corticosterone. In addition, MC2R is required for fetal and neonatal adrenal gland development. Mechanistically, activates adenylate cyclase (cAMP), the MAPK cascade as well as the cAMP-dependent protein kinase A pathway leading to steroidogenic factor 1/NR5A1-mediated transcriptional activation. The sequence is that of Adrenocorticotropic hormone receptor (Mc2r) from Mus musculus (Mouse).